We begin with the raw amino-acid sequence, 782 residues long: MSINLTVDIYIYLLSNARSVCGKQRSKQLYFLFSPKHYWRISHISLQRGFHTNIIRCKWTKSEAHSCSKHCYSPSNHGLHIGILKLSTSAPKGLTKVNICMSRIKSTLNSVSKAVFGNQNEMISRLAQFKPSSQILRKVSDSGWLKQKNIKQAIKSLKKYSDKSAEKSPFPEEKSHIIDKEEDIGKRSLFHYTSSITTKFGDSFYFLSNHINSYFKRKEKMSQQKENEHFRDKSELEDKKVEEGKLRSPDPGILAYKPGSESVHTVDKPTSPSAIPDVLQVSTKQSIANFLSRPTEGVQALVGGYIGGLVPKLKYDSKSQSEEQEEPAKTDQAVSKDRNAEEKKRLSLQREKIIARVSIDNRTRALVQALRRTTDPKLCITRVEELTFHLLEFPEGKGVAVKERIIPYLLRLRQIKDETLQAAVREILALIGYVDPVKGRGIRILSIDGGGTRGVVALQTLRKLVELTQKPVHQLFDYICGVSTGAILAFMLGLFHMPLDECEELYRKLGSDVFSQNVIVGTVKMSWSHAFYDSQTWENILKDRMGSALMIETARNPTCPKVAAVSTIVNRGITPKAFVFRNYGHFPGINSHYLGGCQYKMWQAIRASSAAPGYFAEYALGNDLHQDGGLLLNNPSALAMHECKCLWPDVPLECIVSLGTGRYESDVRNTVTYTSLKTKLSNVINSATDTEEVHIMLDGLLPPDTYFRFNPVMCENIPLDESRNEKLDQLQLEGLKYIERNEQKMKKVAKILSQEKTTLQKINDWIKLKTDMYEGLPFFSKL.

Asn-4 carries an N-linked (GlcNAc...) asparagine glycan. Disordered regions lie at residues 219 to 275 (EKMS…PSAI) and 317 to 343 (SKSQSEEQEEPAKTDQAVSKDRNAEEK). Basic and acidic residues predominate over residues 220 to 248 (KMSQQKENEHFRDKSELEDKKVEEGKLRS). N-linked (GlcNAc...) asparagine glycosylation is present at Asn-361. Residues 445–640 (LSIDGGGTRG…LLNNPSALAM (196 aa)) form the PNPLA domain. A GXGXXG motif is present at residues 449 to 454 (GGGTRG). A helical membrane pass occupies residues 475 to 495 (LFDYICGVSTGAILAFMLGLF). The GXSXG motif lies at 481–485 (GVSTG). Ser-483 functions as the Nucleophile in the catalytic mechanism. The active-site Proton acceptor is Asp-627. A DGA/G motif is present at residues 627-629 (DGG). Lys-736 is modified (N6-succinyllysine).

Expressed in parenchymal tissues including heart, skeletal muscle, placenta, brain, liver and pancreas. Also expressed in bronchial epithelial cells and kidney. Highest expression is observed in skeletal muscle and heart.

The protein localises to the endoplasmic reticulum membrane. It localises to the mitochondrion membrane. The protein resides in the peroxisome membrane. The catalysed reaction is a 1,2-diacyl-sn-glycero-3-phosphocholine + H2O = a 1-acyl-sn-glycero-3-phosphocholine + a fatty acid + H(+). It catalyses the reaction a 1,2-diacyl-sn-glycero-3-phosphocholine + H2O = a 2-acyl-sn-glycero-3-phosphocholine + a fatty acid + H(+). It carries out the reaction a 1,2-diacyl-sn-glycero-3-phosphoethanolamine + H2O = a 1-acyl-sn-glycero-3-phosphoethanolamine + a fatty acid + H(+). The enzyme catalyses a 1-O-(1Z-alkenyl)-2-acyl-sn-glycero-3-phosphocholine + H2O = a 1-O-(1Z-alkenyl)-sn-glycero-3-phosphocholine + a fatty acid + H(+). The catalysed reaction is a 1-acyl-sn-glycero-3-phosphocholine + H2O = sn-glycerol 3-phosphocholine + a fatty acid + H(+). It catalyses the reaction 1-acyl-2-(9Z,12Z)-octadecadienoyl-sn-glycero-3-phosphocholine + H2O = a 1-acyl-sn-glycero-3-phosphocholine + (9Z,12Z)-octadecadienoate + H(+). It carries out the reaction 1-acyl-2-(5Z,8Z,11Z,14Z-eicosatetraenoyl)-sn-glycero-3-phosphocholine + H2O = a 1-acyl-sn-glycero-3-phosphocholine + (5Z,8Z,11Z,14Z)-eicosatetraenoate + H(+). The enzyme catalyses 1-hexadecanoyl-2-(5Z,8Z,11Z,14Z-eicosatetraenoyl)-sn-glycero-3-phosphocholine + H2O = 1-hexadecanoyl-sn-glycero-3-phosphocholine + (5Z,8Z,11Z,14Z)-eicosatetraenoate + H(+). The catalysed reaction is 1-octadecanoyl-2-(9Z-octadecenoyl)-sn-glycero-3-phosphocholine + H2O = 1-octadecanoyl-sn-glycero-3-phosphocholine + (9Z)-octadecenoate + H(+). It catalyses the reaction 1-hexadecanoyl-2-(9Z-octadecenoyl)-sn-glycero-3-phosphocholine + H2O = 1-hexadecanoyl-sn-glycero-3-phosphocholine + (9Z)-octadecenoate + H(+). It carries out the reaction 1-hexadecanoyl-2-(9Z,12Z-octadecadienoyl)-sn-glycero-3-phosphocholine + H2O = (9Z,12Z)-octadecadienoate + 1-hexadecanoyl-sn-glycero-3-phosphocholine + H(+). The enzyme catalyses 1-acyl-2-(9Z,12Z)-octadecadienoyl-sn-glycero-3-phosphoethanolamine + H2O = a 1-acyl-sn-glycero-3-phosphoethanolamine + (9Z,12Z)-octadecadienoate + H(+). The catalysed reaction is 1-acyl-2-(5Z,8Z,11Z,14Z)-eicosatetraenoyl-sn-glycero-3-phosphoethanolamine + H2O = a 1-acyl-sn-glycero-3-phosphoethanolamine + (5Z,8Z,11Z,14Z)-eicosatetraenoate + H(+). It catalyses the reaction 1-hexadecanoyl-2-(5Z,8Z,11Z,14Z-eicosatetraenoyl)-sn-glycero-3-phosphoethanolamine + H2O = 1-hexadecanoyl-sn-glycero-3-phosphoethanolamine + (5Z,8Z,11Z,14Z)-eicosatetraenoate + H(+). It carries out the reaction 1-hexadecanoyl-2-(5Z,8Z,11Z,14Z-eicosatetraenoyl)-sn-glycero-3-phosphocholine + H2O = 2-(5Z,8Z,11Z,14Z)-eicosatetraenoyl-sn-glycero-3-phosphocholine + hexadecanoate + H(+). The enzyme catalyses 1-octadecanoyl-2-(9Z-octadecenoyl)-sn-glycero-3-phosphocholine + H2O = 2-(9Z-octadecenoyl)-sn-glycero-3-phosphocholine + octadecanoate + H(+). The catalysed reaction is 1-hexadecanoyl-2-(4Z,7Z,10Z,13Z,16Z,19Z-docosahexaenoyl)-sn-glycero-3-phosphocholine + H2O = 2-(4Z,7Z,10Z,13Z,16Z,19Z-docosahexaenoyl)-sn-glycero-3-phosphocholine + hexadecanoate + H(+). It catalyses the reaction 1-O-(1Z)-hexadecenyl-2 (5Z,8Z,11Z,14Z)-eicosatetraenoyl-sn-glycero-3-phosphocholine + H2O = 1-(1Z-hexadecenyl)-sn-glycero-3-phosphocholine + (5Z,8Z,11Z,14Z)-eicosatetraenoate + H(+). It carries out the reaction 1-O-(1Z-hexadecenyl)-2-(9Z-octadecenoyl)-sn-glycero-3-phosphocholine + H2O = 1-(1Z-hexadecenyl)-sn-glycero-3-phosphocholine + (9Z)-octadecenoate + H(+). The enzyme catalyses 1-hexadecanoyl-sn-glycero-3-phosphocholine + H2O = sn-glycerol 3-phosphocholine + hexadecanoate + H(+). The catalysed reaction is 1',3'-bis-[1,2-di-(9Z,12Z-octadecadienoyl)-sn-glycero-3-phospho]-glycerol + H2O = 1'-[1,2-di-(9Z,12Z-octadecadienoyl)-sn-glycero-3-phospho]-3'-[1-(9Z,12Z-octadecadienoyl)-sn-glycero-3-phospho]-glycerol + (9Z,12Z)-octadecadienoate + H(+). It catalyses the reaction 1'-[1-acyl-2-(9-hydroxy-(10E,12Z)-octadecadienoyl)-sn-glycero-3-phospho]-3'-[1,2-diacyl-sn-glycero-3-phospho]-glycerol + H2O = 9-hydroxy-(10E,12Z)-octadecadienoate + 1'-[1,2-diacyl-sn-glycero-3-phospho],3'-[1-acyl-sn-glycero-3-phospho]-glycerol + H(+). It participates in phospholipid metabolism. With respect to regulation, calcium-independent phospholipase. Inhibited by (E)-6-bromomethylene-3-1-naphthalenyl-2H-tetrahydropyran-2-one (BEL). The activity toward 1-hexadecanoyl-2-(5Z,8Z,11Z,14Z-eicosatetraenoyl)-sn-glycero-3-phosphocholine is stimulated by cardiolipin. Its function is as follows. Calcium-independent and membrane-bound phospholipase, that catalyzes the esterolytic cleavage of fatty acids from glycerophospholipids to yield free fatty acids and lysophospholipids, hence regulating membrane physical properties and the release of lipid second messengers and growth factors. Hydrolyzes phosphatidylethanolamine, phosphatidylcholine and probably phosphatidylinositol with a possible preference for the former. Also has a broad substrate specificity in terms of fatty acid moieties, hydrolyzing saturated and mono-unsaturated fatty acids at nearly equal rates from either the sn-1 or sn-2 position in diacyl phosphatidylcholine. However, has a weak activity toward polyunsaturated fatty acids at the sn-2 position, and thereby favors the production of 2-arachidonoyl lysophosphatidylcholine, a key branch point metabolite in eicosanoid signaling. On the other hand, can produce arachidonic acid from the sn-1 position of diacyl phospholipid and from the sn-2 position of arachidonate-containing plasmalogen substrates. Therefore, plays an important role in the mobilization of arachidonic acid in response to cellular stimuli and the generation of lipid second messengers. Can also hydrolyze lysophosphatidylcholine. In the mitochondrial compartment, catalyzes the hydrolysis and release of oxidized aliphatic chains from cardiolipin and integrates mitochondrial bioenergetics and signaling. It is essential for maintaining efficient bioenergetic mitochondrial function through tailoring mitochondrial membrane lipid metabolism and composition. This is Calcium-independent phospholipase A2-gamma from Homo sapiens (Human).